The sequence spans 272 residues: Short-chain dehydrogenase srdC (272 aa).

Residues Ile15, Asp65, Arg127, Tyr173, Lys177, Val206, and Thr208 each coordinate NADP(+). Tyr173 (proton donor) is an active-site residue. Lys177 acts as the Lowers pKa of active site Tyr in catalysis.

It belongs to the short-chain dehydrogenases/reductases (SDR) family.

Functionally, short-chain dehydrogenase; part of the gene cluster that mediates the biosynthesis of sordarial, a salicylic aldehyde structurally related to the phytotoxin pyriculol. The most interesting aspect of this pathway is formation of an aromatic product from the highly reducing polyketide synthase srdA. SrdA synthesizes a reduced polyketide chain from one molecule of acetyl-CoA and five molecules of malonyl-CoA. The polyketide chain is then reductively released as an aldehyde. The oxidoreductases srdC, srdD and srdE then oxidize one of the hydroxy groups to facilitate the intramolecular aldol condensation, followed by dehydration to yield a salicylic aldehyde. This aldehyde can undergo facile reduction by endogenous reductases to yield the alcohol 1-hydroxy-2-hydroxymethyl-3-pent-1,3-dienylbenzene. The flavin-dependent srdI counteract against the propensity of the aldehydes to be reduced under physiological conditions and is responsible for reoxidizing 1-hydroxy-2-hydroxymethyl-3-pent-1,3-dienylbenzene back to the salicylic aldehyde. This salicylic aldehyde is then selectively epoxidized by the cupin-domain-containing oxidoreductase srdB to yield the epoxide, which can be hydrolyzed stereoselectively by the hydrolase srdG to give the final product sordarial. The sequence is that of Short-chain dehydrogenase srdC from Neurospora crassa (strain ATCC 24698 / 74-OR23-1A / CBS 708.71 / DSM 1257 / FGSC 987).